Reading from the N-terminus, the 257-residue chain is Trans-aconitate 2-methyltransferase (257 aa).

Belongs to the methyltransferase superfamily. Tam family.

Its subcellular location is the cytoplasm. It carries out the reaction trans-aconitate + S-adenosyl-L-methionine = (E)-3-(methoxycarbonyl)pent-2-enedioate + S-adenosyl-L-homocysteine. Functionally, catalyzes the S-adenosylmethionine monomethyl esterification of trans-aconitate. This is Trans-aconitate 2-methyltransferase from Rhizobium meliloti (strain 1021) (Ensifer meliloti).